We begin with the raw amino-acid sequence, 642 residues long: Arginine--tRNA ligase (642 aa).

Positions 133–143 (VNPTKPLHMGH) match the 'HIGH' region motif.

It belongs to the class-I aminoacyl-tRNA synthetase family.

It localises to the cytoplasm. It catalyses the reaction tRNA(Arg) + L-arginine + ATP = L-arginyl-tRNA(Arg) + AMP + diphosphate. This is Arginine--tRNA ligase from Thermococcus kodakarensis (strain ATCC BAA-918 / JCM 12380 / KOD1) (Pyrococcus kodakaraensis (strain KOD1)).